Consider the following 122-residue polypeptide: Holo-[acyl-carrier-protein] synthase (122 aa).

Mg(2+) contacts are provided by Asp-8 and Glu-56.

Belongs to the P-Pant transferase superfamily. AcpS family. Requires Mg(2+) as cofactor.

The protein localises to the cytoplasm. It carries out the reaction apo-[ACP] + CoA = holo-[ACP] + adenosine 3',5'-bisphosphate + H(+). In terms of biological role, transfers the 4'-phosphopantetheine moiety from coenzyme A to a Ser of acyl-carrier-protein. This is Holo-[acyl-carrier-protein] synthase from Alkaliphilus metalliredigens (strain QYMF).